Here is a 1378-residue protein sequence, read N- to C-terminus: Disease resistance protein RRS1 (1378 aa).

The region spanning E5–H146 is the TIR domain. Residues I170–H421 enclose the NB-ARC domain. Residue G179–T186 coordinates ATP. 9 LRR repeats span residues S498–N522, N535–P553, N554–P575, H577–L598, A621–R646, P665–P688, L742–G766, P768–I793, and P831–L854. A Nuclear localization signal motif is present at residues R988–D1005. A DNA-binding region (WRKY) is located at residues I1204–P1272. The disordered stretch occupies residues R1300 to R1321.

As to quaternary structure, interacts with PopP2, a R.solanacearum type III effector.

It localises to the nucleus. It is found in the cytoplasm. In terms of biological role, transcription factor. Interacts specifically with the W box (5'-(T)TGAC[CT]-3'), a frequently occurring elicitor-responsive cis-acting element. Also acts as a disease resistance protein involved in resistance to fungal and bacterial pathogens, including R.solanacearum, P.syringae pv. tomato and C.higginsianum. RRS1 mediated resistance depends on salicylic acid and NDR1 (AC O48915). The sequence is that of Disease resistance protein RRS1 from Arabidopsis thaliana (Mouse-ear cress).